The primary structure comprises 435 residues: Serine/threonine-protein kinase ssn3 (435 aa).

The Protein kinase domain maps to 49-377 (YRIVGFISSG…AREALEHPYF (329 aa)). ATP contacts are provided by residues 55–63 (ISSGTYGRV) and Lys79. The active-site Proton acceptor is Asp181. Over residues 398 to 407 (RRVTQDDNDI) the composition is skewed to basic and acidic residues. The interval 398–435 (RRVTQDDNDIRSGSLPGTKRSGLPDDSLMGRASKRIKE) is disordered.

This sequence belongs to the protein kinase superfamily. CMGC Ser/Thr protein kinase family. CDC2/CDKX subfamily. As to quaternary structure, component of the srb8-11 complex, a regulatory module of the Mediator complex. It depends on Mg(2+) as a cofactor.

It localises to the nucleus. It catalyses the reaction L-seryl-[protein] + ATP = O-phospho-L-seryl-[protein] + ADP + H(+). The catalysed reaction is L-threonyl-[protein] + ATP = O-phospho-L-threonyl-[protein] + ADP + H(+). The enzyme catalyses [DNA-directed RNA polymerase] + ATP = phospho-[DNA-directed RNA polymerase] + ADP + H(+). Component of the srb8-11 complex. The srb8-11 complex is a regulatory module of the Mediator complex which is itself involved in regulation of basal and activated RNA polymerase II-dependent transcription. The srb8-11 complex may be involved in the transcriptional repression of a subset of genes regulated by Mediator. It may inhibit the association of the Mediator complex with RNA polymerase II to form the holoenzyme complex. The srb8-11 complex phosphorylates the C-terminal domain (CTD) of the largest subunit of RNA polymerase II. This is Serine/threonine-protein kinase ssn3 (ssn3) from Aspergillus terreus (strain NIH 2624 / FGSC A1156).